A 71-amino-acid chain; its full sequence is Small ribosomal subunit protein bS21 (71 aa).

Positions Thr-43–Tyr-71 are disordered. Residues Lys-46–Lys-59 are compositionally biased toward basic residues. Positions Leu-60 to Tyr-71 are enriched in basic and acidic residues.

It belongs to the bacterial ribosomal protein bS21 family.

The chain is Small ribosomal subunit protein bS21 from Edwardsiella ictaluri (strain 93-146).